The chain runs to 40 residues: Photosystem II reaction center protein Y (40 aa).

A helical membrane pass occupies residues 4–22; sequence LLVITLPILAAIGWVTLNI.

The protein belongs to the PsbY family. In terms of assembly, PSII is composed of 1 copy each of membrane proteins PsbA, PsbB, PsbC, PsbD, PsbE, PsbF, PsbH, PsbI, PsbJ, PsbK, PsbL, PsbM, PsbT, PsbX, PsbY, Psb30/Ycf12, peripheral proteins PsbO, CyanoQ (PsbQ), PsbU, PsbV and a large number of cofactors. It forms dimeric complexes.

Its subcellular location is the cellular thylakoid membrane. Its function is as follows. Loosely associated component of the core of photosystem II (PSII), it is not always seen in crystals. PSII is a light-driven water plastoquinone oxidoreductase, using light energy to abstract electrons from H(2)O, generating a proton gradient subsequently used for ATP formation. The polypeptide is Photosystem II reaction center protein Y (Prochlorococcus marinus (strain SARG / CCMP1375 / SS120)).